A 95-amino-acid chain; its full sequence is Small ribosomal subunit protein uS19 (95 aa).

Belongs to the universal ribosomal protein uS19 family.

Its function is as follows. Protein S19 forms a complex with S13 that binds strongly to the 16S ribosomal RNA. The polypeptide is Small ribosomal subunit protein uS19 (Thermosipho melanesiensis (strain DSM 12029 / CIP 104789 / BI429)).